A 625-amino-acid polypeptide reads, in one-letter code: Probable thymidylate synthase (625 aa).

The tract at residues 224 to 323 (AVKNIDGQDD…PEPPVPFTSS (100 aa)) is disordered. The segment covering 243-257 (EEYDDDDDDDVDDNE) has biased composition (acidic residues). 2 stretches are compositionally biased toward polar residues: residues 258–269 (QSNSMIETSANA) and 293–312 (SQAPLGSESVDTQASENVTT). Residues arginine 350 and 477-478 (RR) contribute to the dUMP site. The active-site Nucleophile is the cysteine 497. DUMP contacts are provided by residues 524 to 527 (RSAD), asparagine 535, and 565 to 567 (HIY). Aspartate 527 contributes to the (6R)-5,10-methylene-5,6,7,8-tetrahydrofolate binding site.

The protein in the N-terminal section; belongs to the HFCD (homo-oligomeric flavin containing Cys decarboxylase) superfamily. This sequence in the C-terminal section; belongs to the thymidylate synthase family.

The protein resides in the cytoplasm. The catalysed reaction is dUMP + (6R)-5,10-methylene-5,6,7,8-tetrahydrofolate = 7,8-dihydrofolate + dTMP. The protein operates within pyrimidine metabolism; dTTP biosynthesis. Required for both nuclear and mitochondrial DNA synthesis. The protein is Probable thymidylate synthase of Schizosaccharomyces pombe (strain 972 / ATCC 24843) (Fission yeast).